The sequence spans 98 residues: Post-transcriptional regulator ComN (98 aa).

As to quaternary structure, interacts directly with DivIVA.

The protein localises to the cytoplasm. Required for post-transcription initiation control of the comE operon. Promotes the accumulation of its target comE mRNA to septal and polar sites. This Bacillus subtilis (strain 168) protein is Post-transcriptional regulator ComN (comN).